A 158-amino-acid chain; its full sequence is MSTNAIAVLRGDTVSGIIRFKQDKEGLPTTVTGEVKGLTPGLHGFHIHQYGDTTNGCISAGPHFNPYNKTHGDRTDEIRHVGDLGNIEAGADGTAHISISDQHIQLLGPNSIIGRSIVVHADQDDLGKGVGAKKDESLKTGNAGARVACGIVAIGAAS.

The Cu cation site is built by His46, His48, and His63. Residues Cys57 and Cys149 are joined by a disulfide bond. Residues His63, His71, His80, and Asp83 each contribute to the Zn(2+) site. Position 120 (His120) interacts with Cu cation.

This sequence belongs to the Cu-Zn superoxide dismutase family. As to quaternary structure, homodimer. The cofactor is Cu cation. It depends on Zn(2+) as a cofactor.

The protein resides in the cytoplasm. It carries out the reaction 2 superoxide + 2 H(+) = H2O2 + O2. Its function is as follows. Destroys radicals which are normally produced within the cells and which are toxic to biological systems. The protein is Superoxide dismutase [Cu-Zn] (sod-1) of Onchocerca volvulus.